Reading from the N-terminus, the 127-residue chain is Ribosome-binding factor A (127 aa).

It belongs to the RbfA family. As to quaternary structure, monomer. Binds 30S ribosomal subunits, but not 50S ribosomal subunits or 70S ribosomes.

It localises to the cytoplasm. Its function is as follows. One of several proteins that assist in the late maturation steps of the functional core of the 30S ribosomal subunit. Associates with free 30S ribosomal subunits (but not with 30S subunits that are part of 70S ribosomes or polysomes). Required for efficient processing of 16S rRNA. May interact with the 5'-terminal helix region of 16S rRNA. This Stenotrophomonas maltophilia (strain K279a) protein is Ribosome-binding factor A.